Here is a 69-residue protein sequence, read N- to C-terminus: Small ribosomal subunit protein bS21 (69 aa).

This sequence belongs to the bacterial ribosomal protein bS21 family.

The chain is Small ribosomal subunit protein bS21 from Borrelia duttonii (strain Ly).